Reading from the N-terminus, the 317-residue chain is Porphobilinogen deaminase (317 aa).

Cys240 carries the post-translational modification S-(dipyrrolylmethanemethyl)cysteine.

It belongs to the HMBS family. Monomer. It depends on dipyrromethane as a cofactor.

The enzyme catalyses 4 porphobilinogen + H2O = hydroxymethylbilane + 4 NH4(+). The protein operates within porphyrin-containing compound metabolism; protoporphyrin-IX biosynthesis; coproporphyrinogen-III from 5-aminolevulinate: step 2/4. Its function is as follows. Tetrapolymerization of the monopyrrole PBG into the hydroxymethylbilane pre-uroporphyrinogen in several discrete steps. This Nitratidesulfovibrio vulgaris (strain DSM 19637 / Miyazaki F) (Desulfovibrio vulgaris) protein is Porphobilinogen deaminase.